The sequence spans 222 residues: Transmembrane protein 114 (222 aa).

The helical transmembrane segment at 7 to 27 threads the bilayer; sequence ALAGAAALSGALSFVLLAAAI. Residues Asn54 and Asn88 are each glycosylated (N-linked (GlcNAc...) asparagine). 3 helical membrane-spanning segments follow: residues 105 to 125, 133 to 153, and 188 to 208; these read FVIL…TGFL, LLLL…LTGI, and LALG…FLAA.

Its subcellular location is the cell junction. It localises to the tight junction. The protein resides in the lateral cell membrane. It is found in the apical cell membrane. This Mus musculus (Mouse) protein is Transmembrane protein 114.